We begin with the raw amino-acid sequence, 317 residues long: Ribosomal protein L11 methyltransferase (317 aa).

S-adenosyl-L-methionine is bound by residues threonine 158, glycine 179, aspartate 201, and asparagine 244.

The protein belongs to the methyltransferase superfamily. PrmA family.

Its subcellular location is the cytoplasm. The enzyme catalyses L-lysyl-[protein] + 3 S-adenosyl-L-methionine = N(6),N(6),N(6)-trimethyl-L-lysyl-[protein] + 3 S-adenosyl-L-homocysteine + 3 H(+). In terms of biological role, methylates ribosomal protein L11. In Lactococcus lactis subsp. cremoris (strain MG1363), this protein is Ribosomal protein L11 methyltransferase.